Here is an 854-residue protein sequence, read N- to C-terminus: Cell division control protein 24 (854 aa).

Positions 1–14 are enriched in polar residues; it reads MAIQTRFASGTSLS. Positions 1 to 24 are disordered; it reads MAIQTRFASGTSLSDLKPKPSATS. The region spanning 135-246 is the Calponin-homology (CH) domain; it reads PNMEDTLLTF…VVETLMNSSP (112 aa). One can recognise a DH domain in the interval 278 to 454; sequence EYVKIIKEFV…KNIARSINEN (177 aa). The PH domain maps to 478–668; it reads RISKFGELLY…WSSCLQQLIH (191 aa). Disordered stretches follow at residues 542-571 and 674-745; these read ISASNITDNNGSPHHSYHKRHSNSSSSNNI and QFKA…FESE. Low complexity predominate over residues 682–707; that stretch reads STSTTSSTAKSSSMMSPTTTMNTPNH. The region spanning 761–854 is the PB1 domain; it reads SILFRISYNN…NEKFLNIRLY (94 aa).

In terms of assembly, interacts with AXL2.

Its function is as follows. Promotes the exchange of CDC42-bound GDP by GTP. Controls the polarity of calmodulin, and the calcium regulatory process of bud emergence. CDC24 may be involved in the initial selection and organization of the budding site. This is Cell division control protein 24 (CDC24) from Saccharomyces cerevisiae (strain ATCC 204508 / S288c) (Baker's yeast).